A 477-amino-acid polypeptide reads, in one-letter code: Aspartyl/glutamyl-tRNA(Asn/Gln) amidotransferase subunit B (477 aa).

This sequence belongs to the GatB/GatE family. GatB subfamily. Heterotrimer of A, B and C subunits.

The catalysed reaction is L-glutamyl-tRNA(Gln) + L-glutamine + ATP + H2O = L-glutaminyl-tRNA(Gln) + L-glutamate + ADP + phosphate + H(+). It carries out the reaction L-aspartyl-tRNA(Asn) + L-glutamine + ATP + H2O = L-asparaginyl-tRNA(Asn) + L-glutamate + ADP + phosphate + 2 H(+). Allows the formation of correctly charged Asn-tRNA(Asn) or Gln-tRNA(Gln) through the transamidation of misacylated Asp-tRNA(Asn) or Glu-tRNA(Gln) in organisms which lack either or both of asparaginyl-tRNA or glutaminyl-tRNA synthetases. The reaction takes place in the presence of glutamine and ATP through an activated phospho-Asp-tRNA(Asn) or phospho-Glu-tRNA(Gln). This Legionella pneumophila subsp. pneumophila (strain Philadelphia 1 / ATCC 33152 / DSM 7513) protein is Aspartyl/glutamyl-tRNA(Asn/Gln) amidotransferase subunit B.